A 1226-amino-acid polypeptide reads, in one-letter code: Phosphatidylinositol 3,4,5-trisphosphate 5-phosphatase 2B (1226 aa).

The SH2 domain maps to 6–102 (WYHRDISRVR…GLVAPLLYPV (97 aa)). Residues 106 to 144 (SEANDESSDGDDEKPGSTFANSPPRAISPTATSPPSSSA) form a disordered region. Positions 108 to 117 (ANDESSDGDD) are enriched in acidic residues. A compositionally biased stretch (low complexity) spans 127-144 (SPPRAISPTATSPPSSSA). The short motif at 906–909 (NPAY) is the NPXY motif element. Position 909 is a phosphotyrosine (Y909). Disordered stretches follow at residues 945 to 964 (RVTG…DFTE) and 985 to 1035 (SSAA…LSGK). Residues 1011-1025 (HSSNSSLQLQSHKNN) show a composition bias toward low complexity. The SAM domain maps to 1163-1226 (GAPETVRELL…ILENLPKIWD (64 aa)).

The protein belongs to the inositol 1,4,5-trisphosphate 5-phosphatase family. In terms of processing, tyrosine phosphorylated by the members of the SRC family after exposure to a diverse array of extracellular stimuli.

It localises to the cytoplasm. It is found in the cytosol. Its subcellular location is the cytoskeleton. The protein localises to the membrane. The protein resides in the cell projection. It localises to the filopodium. It is found in the lamellipodium. Its subcellular location is the nucleus. The protein localises to the nucleus speckle. It carries out the reaction a 1,2-diacyl-sn-glycero-3-phospho-(1D-myo-inositol-3,4,5-trisphosphate) + H2O = a 1,2-diacyl-sn-glycero-3-phospho-(1D-myo-inositol-3,4-bisphosphate) + phosphate. Functionally, phosphatidylinositol (PtdIns) phosphatase that specifically hydrolyzes the 5-phosphate of phosphatidylinositol-3,4,5-trisphosphate (PtdIns(3,4,5)P3) to produce PtdIns(3,4)P2, thereby negatively regulating the PI3K (phosphoinositide 3-kinase) pathways. Plays a central role in regulation of PI3K-dependent insulin signaling, although the precise molecular mechanisms and signaling pathways remain unclear. Part of a signaling pathway that regulates actin cytoskeleton remodeling. Required for the maintenance and dynamic remodeling of actin structures as well as in endocytosis, having a major impact on ligand-induced EGFR internalization and degradation. Participates in regulation of cortical and submembraneous actin. Regulates cell adhesion and cell spreading. Acts as a negative regulator of the FC-gamma-RIIA receptor (FCGR2A). Mediates signaling from the FC-gamma-RIIB receptor (FCGR2B), playing a central role in terminating signal transduction from activating immune/hematopoietic cell receptor systems. May also hydrolyze PtdIns(1,3,4,5)P4, and could thus affect the levels of the higher inositol polyphosphates like InsP6. The polypeptide is Phosphatidylinositol 3,4,5-trisphosphate 5-phosphatase 2B (inppl1b) (Danio rerio (Zebrafish)).